Consider the following 142-residue polypeptide: Large ribosomal subunit protein uL11 (142 aa).

The protein belongs to the universal ribosomal protein uL11 family. In terms of assembly, part of the ribosomal stalk of the 50S ribosomal subunit. Interacts with L10 and the large rRNA to form the base of the stalk. L10 forms an elongated spine to which L12 dimers bind in a sequential fashion forming a multimeric L10(L12)X complex. In terms of processing, one or more lysine residues are methylated.

In terms of biological role, forms part of the ribosomal stalk which helps the ribosome interact with GTP-bound translation factors. In Bartonella quintana (strain Toulouse) (Rochalimaea quintana), this protein is Large ribosomal subunit protein uL11.